Consider the following 255-residue polypeptide: Imidazole glycerol phosphate synthase subunit HisF (255 aa).

Active-site residues include aspartate 12 and aspartate 131.

This sequence belongs to the HisA/HisF family. In terms of assembly, heterodimer of HisH and HisF.

Its subcellular location is the cytoplasm. The enzyme catalyses 5-[(5-phospho-1-deoxy-D-ribulos-1-ylimino)methylamino]-1-(5-phospho-beta-D-ribosyl)imidazole-4-carboxamide + L-glutamine = D-erythro-1-(imidazol-4-yl)glycerol 3-phosphate + 5-amino-1-(5-phospho-beta-D-ribosyl)imidazole-4-carboxamide + L-glutamate + H(+). Its pathway is amino-acid biosynthesis; L-histidine biosynthesis; L-histidine from 5-phospho-alpha-D-ribose 1-diphosphate: step 5/9. Its function is as follows. IGPS catalyzes the conversion of PRFAR and glutamine to IGP, AICAR and glutamate. The HisF subunit catalyzes the cyclization activity that produces IGP and AICAR from PRFAR using the ammonia provided by the HisH subunit. This Ruthia magnifica subsp. Calyptogena magnifica protein is Imidazole glycerol phosphate synthase subunit HisF.